The following is a 421-amino-acid chain: UDP-N-acetylglucosamine 1-carboxyvinyltransferase 1 (421 aa).

Position 22-23 (Lys-22–Asn-23) interacts with phosphoenolpyruvate. Residue Arg-95 coordinates UDP-N-acetyl-alpha-D-glucosamine. Cys-119 (proton donor) is an active-site residue. Position 119 is a 2-(S-cysteinyl)pyruvic acid O-phosphothioketal (Cys-119). UDP-N-acetyl-alpha-D-glucosamine-binding positions include Arg-124–Gln-128, Asp-308, and Val-330.

It belongs to the EPSP synthase family. MurA subfamily.

It localises to the cytoplasm. The catalysed reaction is phosphoenolpyruvate + UDP-N-acetyl-alpha-D-glucosamine = UDP-N-acetyl-3-O-(1-carboxyvinyl)-alpha-D-glucosamine + phosphate. It functions in the pathway cell wall biogenesis; peptidoglycan biosynthesis. In terms of biological role, cell wall formation. Adds enolpyruvyl to UDP-N-acetylglucosamine. The sequence is that of UDP-N-acetylglucosamine 1-carboxyvinyltransferase 1 from Staphylococcus aureus (strain bovine RF122 / ET3-1).